The following is a 541-amino-acid chain: Tyrosine-protein kinase Yes (541 aa).

The span at 1-20 (MGCIKSKEDKGPAMKYRTDN) shows a compositional bias: basic and acidic residues. A disordered region spans residues 1 to 43 (MGCIKSKEDKGPAMKYRTDNTPEPISSHVSHYGSDSSQATQSP). A lipid anchor (N-myristoyl glycine) is attached at glycine 2. Cysteine 3 is lipidated: S-palmitoyl cysteine; in membrane form. Residues 26–37 (SSHVSHYGSDSS) are compositionally biased toward low complexity. The 62-residue stretch at 89–150 (GGVTVFVALY…PSNYVAPADS (62 aa)) folds into the SH3 domain. The SH2 domain occupies 156–253 (WYFGKMGRKD…GLCHKLTTVC (98 aa)). One can recognise a Protein kinase domain in the interval 275 to 528 (LRLEVKLGQG…YIQSFLEDYF (254 aa)). ATP contacts are provided by residues 281–289 (LGQGCFGEV) and lysine 303. The Proton acceptor role is filled by aspartate 394. Tyrosine 424 bears the Phosphotyrosine; by autocatalysis mark. Tyrosine 535 carries the phosphotyrosine; by CSK modification.

The protein belongs to the protein kinase superfamily. Tyr protein kinase family. SRC subfamily. In terms of processing, autophosphorylation at Tyr-424 maintains enzyme activity. Post-translationally, palmitoylation at Cys-3 promotes membrane localization.

The protein localises to the cell membrane. It is found in the cytoplasm. It localises to the cytoskeleton. Its subcellular location is the microtubule organizing center. The protein resides in the centrosome. The protein localises to the cytosol. It is found in the cell junction. It catalyses the reaction L-tyrosyl-[protein] + ATP = O-phospho-L-tyrosyl-[protein] + ADP + H(+). Functionally, non-receptor protein tyrosine kinase that is involved in the regulation of cell growth and survival, apoptosis, cell-cell adhesion, cytoskeleton remodeling, differentiation, G2/M progression and cytokinesis. This is Tyrosine-protein kinase Yes (YES1) from Gallus gallus (Chicken).